The primary structure comprises 215 residues: Pyridoxine/pyridoxamine 5'-phosphate oxidase (215 aa).

Substrate is bound by residues 9–12 and Lys69; that span reads RRDY. FMN-binding positions include 64 to 69, 79 to 80, Lys86, and Gln108; these read RVLLLK and FS. Substrate contacts are provided by Tyr126, Arg130, and Ser134. FMN contacts are provided by residues 143-144 and Trp188; that span reads QS. 194–196 contacts substrate; the sequence is RLH. Arg198 lines the FMN pocket.

The protein belongs to the pyridoxamine 5'-phosphate oxidase family. Homodimer. Requires FMN as cofactor.

It carries out the reaction pyridoxamine 5'-phosphate + O2 + H2O = pyridoxal 5'-phosphate + H2O2 + NH4(+). It catalyses the reaction pyridoxine 5'-phosphate + O2 = pyridoxal 5'-phosphate + H2O2. The protein operates within cofactor metabolism; pyridoxal 5'-phosphate salvage; pyridoxal 5'-phosphate from pyridoxamine 5'-phosphate: step 1/1. Its pathway is cofactor metabolism; pyridoxal 5'-phosphate salvage; pyridoxal 5'-phosphate from pyridoxine 5'-phosphate: step 1/1. Functionally, catalyzes the oxidation of either pyridoxine 5'-phosphate (PNP) or pyridoxamine 5'-phosphate (PMP) into pyridoxal 5'-phosphate (PLP). The polypeptide is Pyridoxine/pyridoxamine 5'-phosphate oxidase (Ectopseudomonas mendocina (strain ymp) (Pseudomonas mendocina)).